The sequence spans 153 residues: Protein Smg homolog (153 aa).

It belongs to the Smg family.

The sequence is that of Protein Smg homolog from Neisseria meningitidis serogroup B (strain ATCC BAA-335 / MC58).